A 276-amino-acid chain; its full sequence is NH(3)-dependent NAD(+) synthetase (276 aa).

43–50 (GISGGVDS) is a binding site for ATP. Asp-49 lines the Mg(2+) pocket. Residue Arg-146 participates in deamido-NAD(+) binding. Thr-166 is a binding site for ATP. Glu-171 provides a ligand contact to Mg(2+). Residues Lys-179 and Asp-186 each contribute to the deamido-NAD(+) site. 2 residues coordinate ATP: Lys-195 and Thr-217. 266 to 267 (HK) is a deamido-NAD(+) binding site.

It belongs to the NAD synthetase family. As to quaternary structure, homodimer.

The enzyme catalyses deamido-NAD(+) + NH4(+) + ATP = AMP + diphosphate + NAD(+) + H(+). Its pathway is cofactor biosynthesis; NAD(+) biosynthesis; NAD(+) from deamido-NAD(+) (ammonia route): step 1/1. Functionally, catalyzes the ATP-dependent amidation of deamido-NAD to form NAD. Uses ammonia as a nitrogen source. The protein is NH(3)-dependent NAD(+) synthetase of Shewanella sediminis (strain HAW-EB3).